A 270-amino-acid chain; its full sequence is Type III pantothenate kinase (270 aa).

Position 11-18 (11-18 (DAGNSRIK)) interacts with ATP. Substrate contacts are provided by residues Tyr-96 and 103-106 (GSDR). Asp-105 acts as the Proton acceptor in catalysis. Position 129 (Thr-129) interacts with ATP. Residue Thr-195 coordinates substrate.

It belongs to the type III pantothenate kinase family. As to quaternary structure, homodimer. NH4(+) serves as cofactor. It depends on K(+) as a cofactor.

It localises to the cytoplasm. The catalysed reaction is (R)-pantothenate + ATP = (R)-4'-phosphopantothenate + ADP + H(+). It participates in cofactor biosynthesis; coenzyme A biosynthesis; CoA from (R)-pantothenate: step 1/5. Catalyzes the phosphorylation of pantothenate (Pan), the first step in CoA biosynthesis. The protein is Type III pantothenate kinase of Paraburkholderia phytofirmans (strain DSM 17436 / LMG 22146 / PsJN) (Burkholderia phytofirmans).